A 552-amino-acid polypeptide reads, in one-letter code: Putative transport protein Spro_0050 (552 aa).

Helical transmembrane passes span 4–24 (IALT…MGNW), 26–46 (IYGV…VGHF), 65–85 (FGLI…FFSS), 96–116 (FAIL…KLFA), 117–137 (VPLP…PALG), and 158–178 (MGYA…MWLI). 2 consecutive RCK C-terminal domains span residues 192–276 (AFAS…VIGE) and 279–361 (DVSL…IVGN). 6 helical membrane-spanning segments follow: residues 371-391 (MLPV…PLFI), 393-413 (GFPA…ALIL), 439-459 (IVLF…DTLI), 464-484 (LAWI…VGVL), 493-513 (YLTL…LAFA), and 530-550 (VYPL…VLFW).

This sequence belongs to the AAE transporter (TC 2.A.81) family. YidE subfamily.

The protein resides in the cell membrane. This Serratia proteamaculans (strain 568) protein is Putative transport protein Spro_0050.